The following is a 242-amino-acid chain: MDHKSPLVSWNVFGFDIVFNLASVLMVVITAILVFILAIVCTRNLKKRPTGKQNFIEWVFDFVRGIIESNMAWKKGGNFHFLAVTLILFIFVANMLGLPFAIVTHDHTLWWKSPTADATVTLTLSTTMILLTHYYGIKMRGTKAYAAGYFKPFWPLAIINVFEEFTSTLTLGLRLYGNIFAGELLLGLLASLFFEQPAWGWIISIPGLIVWQAFSIFVGTIQAYIFVMLSMVYMSHKVADGH.

5 consecutive transmembrane segments (helical) span residues 21-41, 83-103, 118-137, 175-195, and 198-218; these read LASV…AIVC, AVTL…FAIV, ATVT…YYGI, LYGN…LFFE, and AWGW…SIFV.

Belongs to the ATPase A chain family. F-type ATPases have 2 components, CF(1) - the catalytic core - and CF(0) - the membrane proton channel. CF(1) has five subunits: alpha(3), beta(3), gamma(1), delta(1), epsilon(1). CF(0) has three main subunits: a(1), b(2) and c(9-12). The alpha and beta chains form an alternating ring which encloses part of the gamma chain. CF(1) is attached to CF(0) by a central stalk formed by the gamma and epsilon chains, while a peripheral stalk is formed by the delta and b chains.

The protein resides in the cell membrane. In terms of biological role, key component of the proton channel; it plays a direct role in the translocation of protons across the membrane. This chain is ATP synthase subunit a, found in Staphylococcus epidermidis (strain ATCC 35984 / DSM 28319 / BCRC 17069 / CCUG 31568 / BM 3577 / RP62A).